Here is a 444-residue protein sequence, read N- to C-terminus: Pre-mRNA-splicing factor cwc25 (444 aa).

Disordered regions lie at residues 1–27 (MGSG…QKAE), 168–385 (LASM…TDLD), and 397–425 (EAER…GFMS). Residues 19 to 65 (NVAATQKAEAEAIAERKKLQQRLQEIEEERRKEEIQKALEAAGGKRK) adopt a coiled-coil conformation. Over residues 186–199 (QRRHKHRSHHHRSD) the composition is skewed to basic residues. Basic and acidic residues-rich tracts occupy residues 200–220 (RHRD…DRDR) and 228–281 (DSRD…DDRS). A compositionally biased stretch (basic residues) spans 282–293 (RRHRFPQGRSRS). Basic and acidic residues-rich tracts occupy residues 305 to 344 (RREY…EQPK), 360 to 372 (DGDH…ERAK), and 397 to 410 (EAER…EKAR). A coiled-coil region spans residues 364–417 (KNAEEERAKKLAAMQAAATDLDKAREERLKALAEAERAEREADEKARQQNKKFR).

It belongs to the CWC25 family. As to quaternary structure, associated with the spliceosome.

It is found in the nucleus. Functionally, involved in pre-mRNA splicing. The chain is Pre-mRNA-splicing factor cwc25 (msp-6) from Neurospora crassa (strain ATCC 24698 / 74-OR23-1A / CBS 708.71 / DSM 1257 / FGSC 987).